Consider the following 1070-residue polypeptide: DNA-directed RNA polymerase subunit beta (1070 aa).

It belongs to the RNA polymerase beta chain family. In terms of assembly, in plastids the minimal PEP RNA polymerase catalytic core is composed of four subunits: alpha, beta, beta', and beta''. When a (nuclear-encoded) sigma factor is associated with the core the holoenzyme is formed, which can initiate transcription.

It is found in the plastid. It carries out the reaction RNA(n) + a ribonucleoside 5'-triphosphate = RNA(n+1) + diphosphate. In terms of biological role, DNA-dependent RNA polymerase catalyzes the transcription of DNA into RNA using the four ribonucleoside triphosphates as substrates. The sequence is that of DNA-directed RNA polymerase subunit beta from Cuscuta exaltata (Tall dodder).